The primary structure comprises 209 residues: MQSKFIVIEGLDGAGKSTAISFVRKYLEKNNLAAIYTREPGGTKIAEELRNLVLHNKYDEEIHSDSELLMIYAGRVQHYRNLIAPALEKGINVVSDRFYWSSMAYQGGGRGVELSKIRALNDNFLNGCEPDLVIYLDIDPILGLQRAQKVGSPDRIEKAGLEFFNRTRNVFKDLVKDSDNAIEIDAAKSIQEVEKQIYLILDKHFNFQN.

10-17 contributes to the ATP binding site; that stretch reads GLDGAGKS.

It belongs to the thymidylate kinase family.

It carries out the reaction dTMP + ATP = dTDP + ADP. Phosphorylation of dTMP to form dTDP in both de novo and salvage pathways of dTTP synthesis. This Francisella tularensis subsp. novicida (strain U112) protein is Thymidylate kinase.